Here is a 176-residue protein sequence, read N- to C-terminus: ATP-dependent protease subunit HslV (176 aa).

The active site involves Thr-2. Residues Ala-157, Cys-160, and Thr-163 each coordinate Na(+).

Belongs to the peptidase T1B family. HslV subfamily. In terms of assembly, a double ring-shaped homohexamer of HslV is capped on each side by a ring-shaped HslU homohexamer. The assembly of the HslU/HslV complex is dependent on binding of ATP.

The protein localises to the cytoplasm. It catalyses the reaction ATP-dependent cleavage of peptide bonds with broad specificity.. With respect to regulation, allosterically activated by HslU binding. Its function is as follows. Protease subunit of a proteasome-like degradation complex believed to be a general protein degrading machinery. The chain is ATP-dependent protease subunit HslV from Buchnera aphidicola subsp. Acyrthosiphon pisum (strain APS) (Acyrthosiphon pisum symbiotic bacterium).